The chain runs to 78 residues: Translational regulator CsrA (78 aa).

It belongs to the CsrA/RsmA family. As to quaternary structure, homodimer; the beta-strands of each monomer intercalate to form a hydrophobic core, while the alpha-helices form wings that extend away from the core.

The protein resides in the cytoplasm. Its function is as follows. A translational regulator that binds mRNA to regulate translation initiation and/or mRNA stability. Usually binds in the 5'-UTR at or near the Shine-Dalgarno sequence preventing ribosome-binding, thus repressing translation. Its main target seems to be the major flagellin gene, while its function is anatagonized by FliW. The polypeptide is Translational regulator CsrA (Desulfotalea psychrophila (strain LSv54 / DSM 12343)).